A 37-amino-acid polypeptide reads, in one-letter code: MKVRASVKAMCKDCKNIKRKGIRRIICIQPKHKQRQG.

The protein belongs to the bacterial ribosomal protein bL36 family.

The chain is Large ribosomal subunit protein bL36 from Mycoplasmopsis pulmonis (strain UAB CTIP) (Mycoplasma pulmonis).